The primary structure comprises 184 residues: uncharacterized protein (184 aa).

The segment at 32 to 52 (PCPRSRTQGQSRRSETHTISR) is disordered.

It localises to the mitochondrion. This is an uncharacterized protein from Arabidopsis thaliana (Mouse-ear cress).